Here is a 221-residue protein sequence, read N- to C-terminus: Glutathione peroxidase 6 (221 aa).

The signal sequence occupies residues 1–19 (MAQKLWGSCLFSLFMAALA). Residue cysteine 73 is part of the active site.

The protein belongs to the glutathione peroxidase family.

It is found in the secreted. The catalysed reaction is 2 glutathione + H2O2 = glutathione disulfide + 2 H2O. In Mus musculus (Mouse), this protein is Glutathione peroxidase 6 (Gpx6).